A 136-amino-acid chain; its full sequence is Peptide methionine sulfoxide reductase MsrB (136 aa).

The region spanning 7–129 (SSSHENTLTE…NSASLSFTDD (123 aa)) is the MsrB domain. Zn(2+)-binding residues include cysteine 46, cysteine 49, cysteine 95, and cysteine 98. Cysteine 118 (nucleophile) is an active-site residue.

This sequence belongs to the MsrB Met sulfoxide reductase family. The cofactor is Zn(2+).

It carries out the reaction L-methionyl-[protein] + [thioredoxin]-disulfide + H2O = L-methionyl-(R)-S-oxide-[protein] + [thioredoxin]-dithiol. The sequence is that of Peptide methionine sulfoxide reductase MsrB from Erwinia tasmaniensis (strain DSM 17950 / CFBP 7177 / CIP 109463 / NCPPB 4357 / Et1/99).